Reading from the N-terminus, the 227-residue chain is Protein M1425_1941 (227 aa).

Residues 15-209 (EIGRFLIEIA…ETRPDGSDII (195 aa)) form the AMMECR1 domain.

This is Protein M1425_1941 from Saccharolobus islandicus (strain M.14.25 / Kamchatka #1) (Sulfolobus islandicus).